The following is a 446-amino-acid chain: MEETIKDPPTSAVLLDHCHFSQVIFNSVEKFYIPGGDVTCHYTFTQHFIPRRKDWIGIFRVGWKTTREYYTFMWVTLPIDLNNKSAKQQEVQFKAYYLPKDDEYYQFCYVDEDGVVRGASIPFQFRPENEEDILVVTTQGEVEEIEQHNKELCKENQELKDSCISLQKQNSDMQAELQKKQEELETLQSINKKLELKVKEQKDYWETELLQLKEQNQKMSSENEKMGIRVDQLQAQLSTQEKEMEKLVQGDQDKTEQLEQLKKENDHLFLSLTEQRKDQKKLEQTVEQMKQNETTAMKKQQELMDENFDLSKRLSENEIICNALQRQKERLEGENDLLKRENSRLLSYMGLDFNSLPYQVPTSDEGGARQNPGLAYGNPYSGIQESSSPSPLSIKKCPICKADDICDHTLEQQQMQPLCFNCPICDKIFPATEKQIFEDHVFCHSL.

The short motif at 133-136 (ILVV) is the CLIR element. Residues 137–349 (TTQGEVEEIE…RENSRLLSYM (213 aa)) are a coiled coil. Positions 203 to 206 (DYWE) match the LIR-like motif. Residues 362–390 (TSDEGGARQNPGLAYGNPYSGIQESSSPS) are disordered. The interval 371–381 (NPGLAYGNPYS) is interaction with LGALS8. The segment covering 381-390 (SGIQESSSPS) has biased composition (polar residues). The segment at 395 to 446 (KKCPICKADDICDHTLEQQQMQPLCFNCPICDKIFPATEKQIFEDHVFCHSL) is interaction with MYO6. The UBZ1-type zinc finger occupies 419–444 (CFNCPICDKIFPATEKQIFEDHVFCH). Zn(2+) is bound by residues Cys422, Cys425, His440, and His444. Residue Ser445 is modified to Phosphoserine.

It belongs to the CALCOCO family. In terms of assembly, dimer. Part of a complex consisting of CALCOCO2, TAX1BP1 and MYO6. Interacts with MYO6. Interacts with GEMIN4. Interacts with ATG8 family members MAP1LC3A, MAP1LC3B, GABARAP, GABARAPL1 and GABARAPL2. Interacts with ATG8 family member MAP1LC3C. Interacts with LGALS8. Interacts with TOM1; the interaction is indirect and is mediated by MYO6, which acts as a bridge between TOM1 and CALCOCO2. Interacts with AZI2. (Microbial infection) Interacts with Lassa virus protein Z. As to quaternary structure, (Microbial infection) Interacts with Mopeia virus protein Z. In terms of processing, (Microbial infection) Cleaved by S.pyogenes SpeB protease; leading to its degradation. Degradation by SpeB prevents autophagy, promoting to S.pyogenes intracellular replication. As to expression, expressed in all tissues tested with highest expression in skeletal muscle and lowest in brain.

It is found in the cytoplasm. The protein resides in the perinuclear region. Its subcellular location is the cytoskeleton. The protein localises to the cytoplasmic vesicle. It localises to the autophagosome membrane. Functionally, xenophagy-specific receptor required for autophagy-mediated intracellular bacteria degradation. Acts as an effector protein of galectin-sensed membrane damage that restricts the proliferation of infecting pathogens such as Salmonella typhimurium upon entry into the cytosol by targeting LGALS8-associated bacteria for autophagy. Initially orchestrates bacteria targeting to autophagosomes and subsequently ensures pathogen degradation by regulating pathogen-containing autophagosome maturation. Bacteria targeting to autophagosomes relies on its interaction with MAP1LC3A, MAP1LC3B and/or GABARAPL2, whereas regulation of pathogen-containing autophagosome maturation requires the interaction with MAP3LC3C. May play a role in ruffle formation and actin cytoskeleton organization and seems to negatively regulate constitutive secretion. In Homo sapiens (Human), this protein is Calcium-binding and coiled-coil domain-containing protein 2 (CALCOCO2).